Reading from the N-terminus, the 435-residue chain is 5-methylthioadenosine/S-adenosylhomocysteine deaminase (435 aa).

Residues His-65 and His-67 each contribute to the Zn(2+) site. Substrate-binding residues include Glu-94, Arg-150, and His-189. Zn(2+) is bound at residue His-216. Substrate is bound by residues Glu-219 and Asp-304. Asp-304 lines the Zn(2+) pocket.

It belongs to the metallo-dependent hydrolases superfamily. MTA/SAH deaminase family. Requires Zn(2+) as cofactor.

The enzyme catalyses S-adenosyl-L-homocysteine + H2O + H(+) = S-inosyl-L-homocysteine + NH4(+). It catalyses the reaction S-methyl-5'-thioadenosine + H2O + H(+) = S-methyl-5'-thioinosine + NH4(+). Functionally, catalyzes the deamination of 5-methylthioadenosine and S-adenosyl-L-homocysteine into 5-methylthioinosine and S-inosyl-L-homocysteine, respectively. Is also able to deaminate adenosine. This Bacillus cereus (strain G9842) protein is 5-methylthioadenosine/S-adenosylhomocysteine deaminase.